Here is a 617-residue protein sequence, read N- to C-terminus: Vitamin B12 transporter BtuB (617 aa).

The first 22 residues, 1–22 (MRKTFLAITCASLLSPTFYSQA), serve as a signal peptide directing secretion. A TonB box motif is present at residues 29-36 (ETVVVTAN). The TBDR plug domain occupies 40-154 (QIDGAVLAQT…ISGVINIITR (115 aa)). The 459-residue stretch at 159-617 (DDSGRVSAGY…QYFVSADYRF (459 aa)) folds into the TBDR beta-barrel domain. Positions 600 to 617 (VGYVTPGRQYFVSADYRF) match the TonB C-terminal box motif.

This sequence belongs to the TonB-dependent receptor family. BtuB (TC 1.B.14.3.1) subfamily.

The protein localises to the cell outer membrane. In terms of biological role, involved in the active translocation of vitamin B12 (cyanocobalamin) across the outer membrane to the periplasmic space. It derives its energy for transport by interacting with the trans-periplasmic membrane protein TonB. This chain is Vitamin B12 transporter BtuB, found in Vibrio campbellii (strain ATCC BAA-1116).